We begin with the raw amino-acid sequence, 452 residues long: cAMP/cGMP-dependent 3',5'-cAMP/cGMP phosphodiesterase A (452 aa).

An N-terminal signal peptide occupies residues 1–23 (MALNKKLISLLLLIFIILNIVNS). Residues 24–49 (HQQEDCDDDDEDIGISAERSERRSVK) constitute a propeptide that is removed on maturation. Residues asparagine 101, asparagine 141, and asparagine 277 are each glycosylated (N-linked (GlcNAc...) asparagine).

It belongs to the cyclic nucleotide phosphodiesterase class-II family.

It is found in the secreted. It localises to the extracellular space. The protein resides in the cell surface. It catalyses the reaction 3',5'-cyclic AMP + H2O = AMP + H(+). It carries out the reaction 3',5'-cyclic GMP + H2O = GMP + H(+). With respect to regulation, inhibited by dithiotreitol (DTT). Phosphodiesterase which displays a preference for cAMP over cGMP. Involved in the degradation of extracellular cAMP. Maintains the responsiveness of cells to the chemoattractant cAMP during the aggregation phase of development. This is cAMP/cGMP-dependent 3',5'-cAMP/cGMP phosphodiesterase A (pdsA) from Dictyostelium discoideum (Social amoeba).